The sequence spans 300 residues: Bifunctional protein FolD (300 aa).

Residues Gly-168 to Ser-170, Ser-193, and Ile-234 each bind NADP(+).

This sequence belongs to the tetrahydrofolate dehydrogenase/cyclohydrolase family. Homodimer.

The enzyme catalyses (6R)-5,10-methylene-5,6,7,8-tetrahydrofolate + NADP(+) = (6R)-5,10-methenyltetrahydrofolate + NADPH. It carries out the reaction (6R)-5,10-methenyltetrahydrofolate + H2O = (6R)-10-formyltetrahydrofolate + H(+). It participates in one-carbon metabolism; tetrahydrofolate interconversion. Its function is as follows. Catalyzes the oxidation of 5,10-methylenetetrahydrofolate to 5,10-methenyltetrahydrofolate and then the hydrolysis of 5,10-methenyltetrahydrofolate to 10-formyltetrahydrofolate. This chain is Bifunctional protein FolD, found in Ehrlichia ruminantium (strain Welgevonden).